The sequence spans 157 residues: Nucleoside deoxyribosyltransferase (157 aa).

The active-site Nucleophile is the Glu-98.

This sequence belongs to the nucleoside deoxyribosyltransferase family. Homohexamer.

It carries out the reaction 2-deoxy-D-ribosyl-base(1) + base(2) = 2-deoxy-D-ribosyl-base(2) + base(1).. The protein operates within nucleotide metabolism; nucleotide salvage pathway. Functionally, catalyzes the cleavage of the glycosidic bond of 2'-deoxyribonucleosides and the transfer of the deoxyribosyl moiety to an acceptor purine or pyrimidine base. This chain is Nucleoside deoxyribosyltransferase (ntd), found in Lactobacillus leichmannii.